Here is a 691-residue protein sequence, read N- to C-terminus: Elongation factor G (691 aa).

The tr-type G domain occupies Glu8 to Ile283. GTP is bound by residues Ala17–Thr24, Asp81–His85, and Asn135–Asp138.

Belongs to the TRAFAC class translation factor GTPase superfamily. Classic translation factor GTPase family. EF-G/EF-2 subfamily.

Its subcellular location is the cytoplasm. In terms of biological role, catalyzes the GTP-dependent ribosomal translocation step during translation elongation. During this step, the ribosome changes from the pre-translocational (PRE) to the post-translocational (POST) state as the newly formed A-site-bound peptidyl-tRNA and P-site-bound deacylated tRNA move to the P and E sites, respectively. Catalyzes the coordinated movement of the two tRNA molecules, the mRNA and conformational changes in the ribosome. The protein is Elongation factor G of Beijerinckia indica subsp. indica (strain ATCC 9039 / DSM 1715 / NCIMB 8712).